Reading from the N-terminus, the 270-residue chain is ES1 protein, mitochondrial (270 aa).

In terms of tissue distribution, expressed specifically in the inner segments of cone photoreceptor cells of the retina (at protein level).

It is found in the mitochondrion. Its function is as follows. Plays a role in promoting mitochondrial enlargement in cone photoreceptor cells in a fusion-independent and ATP-dependent manner. In Danio rerio (Zebrafish), this protein is ES1 protein, mitochondrial.